Here is a 329-residue protein sequence, read N- to C-terminus: NAD(+) hydrolase TcpA (329 aa).

Residues 5-134 form the MPN domain; that stretch reads VSISYLALEQ…ADCVRFYTVR (130 aa). The 133-residue stretch at 192–324 folds into the TIR domain; that stretch reads FEYDVFICHA…YVVNEILRVL (133 aa). NAD(+) contacts are provided by residues 201-202 and S231; that span reads AH. E267 is a catalytic residue.

It carries out the reaction NAD(+) + H2O = ADP-D-ribose + nicotinamide + H(+). In terms of biological role, NAD(+) hydrolase (NADase) that catalyzes cleavage of NAD(+) into ADP-D-ribose (ADPR) and nicotinamide. In Theionarchaea archaeon (strain DG-70-1), this protein is NAD(+) hydrolase TcpA.